Reading from the N-terminus, the 185-residue chain is Orotate phosphoribosyltransferase (185 aa).

5-phospho-alpha-D-ribose 1-diphosphate contacts are provided by residues arginine 98, lysine 99, lysine 102, histidine 104, and 128-136; that span reads EDVTTTGGS. Orotate-binding residues include threonine 132 and arginine 160.

The protein belongs to the purine/pyrimidine phosphoribosyltransferase family. PyrE subfamily. Homodimer. Mg(2+) serves as cofactor.

It carries out the reaction orotidine 5'-phosphate + diphosphate = orotate + 5-phospho-alpha-D-ribose 1-diphosphate. It participates in pyrimidine metabolism; UMP biosynthesis via de novo pathway; UMP from orotate: step 1/2. Functionally, catalyzes the transfer of a ribosyl phosphate group from 5-phosphoribose 1-diphosphate to orotate, leading to the formation of orotidine monophosphate (OMP). The sequence is that of Orotate phosphoribosyltransferase from Bradyrhizobium sp. (strain ORS 278).